Reading from the N-terminus, the 1388-residue chain is Rho-associated protein kinase 2 (1388 aa).

Residues 1 to 27 (MSRPPPTGKMPGAPETAPGDGAGASRQ) form a disordered region. The 263-residue stretch at 92–354 (YDVVKVIGRG…VEEIRQHPFF (263 aa)) folds into the Protein kinase domain. Residues 98-106 (IGRGAFGEV) and Lys-121 each bind ATP. Asp-214 serves as the catalytic Proton acceptor. An AGC-kinase C-terminal domain is found at 357–425 (DQWHWDNIRE…YRENLLLSDS (69 aa)). The interaction with PPP1R12A stretch occupies residues 363 to 784 (NIRETAAPVV…INELLKQKDV (422 aa)). The segment at 373–420 (PELSSDIDSSNFDDIEDDKGDVETFPIPKAFVGNQLPFIGFTYYRENL) is interaction with NPM1. Phosphothreonine; by ROCK2 is present on Thr-414. Coiled-coil stretches lie at residues 429-1024 (RETD…EKQL) and 1053-1131 (DTDV…IGLD). The region spanning 497 to 573 (ALRQLEREKA…LDETNALLRT (77 aa)) is the REM-1 domain. The residue at position 722 (Tyr-722) is a Phosphotyrosine; by SRC. The 69-residue stretch at 979–1047 (TSDVANLANE…LAEIMNRKEP (69 aa)) folds into the RhoBD domain. The RHOA binding stretch occupies residues 979–1047 (TSDVANLANE…LAEIMNRKEP (69 aa)). A Phosphoserine modification is found at Ser-1137. One can recognise a PH domain in the interval 1150–1349 (ESRLEGWLSL…WVSRLVKKIP (200 aa)). Thr-1212 bears the Phosphothreonine mark. A Phorbol-ester/DAG-type zinc finger spans residues 1260 to 1315 (GHEFIPTLYHFPTNCEACMKPLWHMFKPPPALECRRCHIKCHKDHMDKKEEIIAPC). Residues 1345–1388 (VKKIPKKPPAPDPFARSSPRTSMKIQQNQSIRRPSRQLAPNKPS) form a disordered region. Residues Ser-1362 and Ser-1374 each carry the phosphoserine modification. Over residues 1362–1376 (SPRTSMKIQQNQSIR) the composition is skewed to polar residues.

This sequence belongs to the protein kinase superfamily. AGC Ser/Thr protein kinase family. In terms of assembly, homodimer. Interacts with IRS1. Interacts with RAF1. Interacts with RHOA (activated by GTP), RHOB and RHOC. Interacts with PPP1R12A. Interacts with EP300. Interacts with CHORDC1. Interacts with BRCA2. Interacts with NPM1; this interaction enhances ROCK2 activity. Interacts with SORL1. Interacts with PJVK. Mg(2+) serves as cofactor. In terms of processing, phosphorylation at Tyr-722 reduces its binding to RHOA and is crucial for focal adhesion dynamics. Dephosphorylation by PTPN11 stimulates its RHOA binding activity. Post-translationally, cleaved by granzyme B during apoptosis. This leads to constitutive activation of the kinase and membrane blebbing. As to expression, expressed in the brain (at protein level).

It localises to the cytoplasm. It is found in the cell membrane. The protein localises to the nucleus. Its subcellular location is the cytoskeleton. The protein resides in the microtubule organizing center. It localises to the centrosome. The enzyme catalyses L-seryl-[protein] + ATP = O-phospho-L-seryl-[protein] + ADP + H(+). It catalyses the reaction L-threonyl-[protein] + ATP = O-phospho-L-threonyl-[protein] + ADP + H(+). With respect to regulation, activated by RHOA binding. Inhibited by Y-27632. Protein kinase which is a key regulator of actin cytoskeleton and cell polarity. Involved in regulation of smooth muscle contraction, actin cytoskeleton organization, stress fiber and focal adhesion formation, neurite retraction, cell adhesion and motility via phosphorylation of ADD1, BRCA2, CNN1, EZR, DPYSL2, EP300, MSN, MYL9/MLC2, NPM1, RDX, PPP1R12A and VIM. Phosphorylates SORL1 and IRF4. Acts as a negative regulator of VEGF-induced angiogenic endothelial cell activation. Positively regulates the activation of p42/MAPK1-p44/MAPK3 and of p90RSK/RPS6KA1 during myogenic differentiation. Plays an important role in the timely initiation of centrosome duplication. Inhibits keratinocyte terminal differentiation. May regulate closure of the eyelids and ventral body wall through organization of actomyosin bundles. Plays a critical role in the regulation of spine and synaptic properties in the hippocampus. Plays an important role in generating the circadian rhythm of the aortic myofilament Ca(2+) sensitivity and vascular contractility by modulating the myosin light chain phosphorylation. The chain is Rho-associated protein kinase 2 (ROCK2) from Homo sapiens (Human).